A 173-amino-acid polypeptide reads, in one-letter code: MIDADGFRANVGIILANTQGQVLWAKRVGHDSWQFPQGGIDEGETPLDAMYRELWEEVGLYPRHVQLLAATDNWLRYRLPKRYIRHGQHPLCIGQKQKWFLLKLDEPNTEHIRFDTAKPEFDHWEWVSYWYPLGQVVHFKRGVYRRALRELARELPLKKELILPETKNHLLQV.

The Nudix hydrolase domain occupies 6 to 149 (GFRANVGIIL…KRGVYRRALR (144 aa)). The short motif at 38–59 (GGIDEGETPLDAMYRELWEEVG) is the Nudix box element.

The protein belongs to the Nudix hydrolase family. RppH subfamily. A divalent metal cation serves as cofactor.

Functionally, accelerates the degradation of transcripts by removing pyrophosphate from the 5'-end of triphosphorylated RNA, leading to a more labile monophosphorylated state that can stimulate subsequent ribonuclease cleavage. This is RNA pyrophosphohydrolase from Psychrobacter sp. (strain PRwf-1).